Consider the following 249-residue polypeptide: Putative SAP domain-containing protein 049L (249 aa).

Basic and acidic residues-rich tracts occupy residues 1–12 (MAAPKAEGEDKP), 22–38 (PKPETKEVKKPKSKEFC), and 95–107 (KKAESSDDKKLDE). The segment at 1–110 (MAAPKAEGED…DDKKLDEATG (110 aa)) is disordered. The 35-residue stretch at 119-153 (LSKLTIQTLKGMCKTRNLKISGNKAALVQRLIEAD) folds into the SAP domain.

The chain is Putative SAP domain-containing protein 049L from Frog virus 3 (isolate Goorha) (FV-3).